A 545-amino-acid polypeptide reads, in one-letter code: O-phosphoserine--tRNA(Cys) ligase (545 aa).

Residues 189 to 191 (HMT), 234 to 236 (SAS), 276 to 277 (YY), and Asn-328 contribute to the substrate site.

It belongs to the class-II aminoacyl-tRNA synthetase family. O-phosphoseryl-tRNA(Cys) synthetase subfamily. Homotetramer. Interacts with SepCysS.

The catalysed reaction is tRNA(Cys) + O-phospho-L-serine + ATP = O-phospho-L-seryl-tRNA(Cys) + AMP + diphosphate. Its function is as follows. Catalyzes the attachment of O-phosphoserine (Sep) to tRNA(Cys). In Methanothrix thermoacetophila (strain DSM 6194 / JCM 14653 / NBRC 101360 / PT) (Methanosaeta thermophila), this protein is O-phosphoserine--tRNA(Cys) ligase.